The primary structure comprises 358 residues: UDP-N-acetylglucosamine--N-acetylmuramyl-(pentapeptide) pyrophosphoryl-undecaprenol N-acetylglucosamine transferase (358 aa).

Residues 11-13, N122, R161, S189, I243, 262-267, and Q288 contribute to the UDP-N-acetyl-alpha-D-glucosamine site; these read TGG and ALTVCE.

This sequence belongs to the glycosyltransferase 28 family. MurG subfamily.

It is found in the cell inner membrane. The enzyme catalyses di-trans,octa-cis-undecaprenyl diphospho-N-acetyl-alpha-D-muramoyl-L-alanyl-D-glutamyl-meso-2,6-diaminopimeloyl-D-alanyl-D-alanine + UDP-N-acetyl-alpha-D-glucosamine = di-trans,octa-cis-undecaprenyl diphospho-[N-acetyl-alpha-D-glucosaminyl-(1-&gt;4)]-N-acetyl-alpha-D-muramoyl-L-alanyl-D-glutamyl-meso-2,6-diaminopimeloyl-D-alanyl-D-alanine + UDP + H(+). The protein operates within cell wall biogenesis; peptidoglycan biosynthesis. Cell wall formation. Catalyzes the transfer of a GlcNAc subunit on undecaprenyl-pyrophosphoryl-MurNAc-pentapeptide (lipid intermediate I) to form undecaprenyl-pyrophosphoryl-MurNAc-(pentapeptide)GlcNAc (lipid intermediate II). The sequence is that of UDP-N-acetylglucosamine--N-acetylmuramyl-(pentapeptide) pyrophosphoryl-undecaprenol N-acetylglucosamine transferase from Coxiella burnetii (strain Dugway 5J108-111).